The chain runs to 482 residues: Ribulose bisphosphate carboxylase large chain (482 aa).

Positions 1-2 are excised as a propeptide; that stretch reads MS. Position 3 is an N-acetylproline (P3). K14 carries the N6,N6,N6-trimethyllysine modification. 2 residues coordinate substrate: N123 and T173. The active-site Proton acceptor is the K175. K177 contacts substrate. 3 residues coordinate Mg(2+): K201, D203, and E204. K201 is modified (N6-carboxylysine). H294 acts as the Proton acceptor in catalysis. 3 residues coordinate substrate: R295, H327, and S379.

It belongs to the RuBisCO large chain family. Type I subfamily. As to quaternary structure, heterohexadecamer of 8 large chains and 8 small chains; disulfide-linked. The disulfide link is formed within the large subunit homodimers. Requires Mg(2+) as cofactor. The disulfide bond which can form in the large chain dimeric partners within the hexadecamer appears to be associated with oxidative stress and protein turnover.

It is found in the plastid. Its subcellular location is the chloroplast. It catalyses the reaction 2 (2R)-3-phosphoglycerate + 2 H(+) = D-ribulose 1,5-bisphosphate + CO2 + H2O. The enzyme catalyses D-ribulose 1,5-bisphosphate + O2 = 2-phosphoglycolate + (2R)-3-phosphoglycerate + 2 H(+). Its function is as follows. RuBisCO catalyzes two reactions: the carboxylation of D-ribulose 1,5-bisphosphate, the primary event in carbon dioxide fixation, as well as the oxidative fragmentation of the pentose substrate in the photorespiration process. Both reactions occur simultaneously and in competition at the same active site. The polypeptide is Ribulose bisphosphate carboxylase large chain (Phytolacca americana (American pokeweed)).